The following is a 234-amino-acid chain: Glycoprotein BDLF3 (234 aa).

Positions 1 to 28 (MAHARDKAGAVMAMILICETSLIWTSSG) are cleaved as a signal peptide. A disordered region spans residues 29–62 (SSTASAGNVTGTTAVTTPSPSASGPSTNQSTTLT). N36, N56, N77, N96, N101, N110, N127, N144, and N159 each carry an N-linked (GlcNAc...) asparagine; by host glycan. Residues 116–138 (AGTGTSTGVTSNVTTRSSSTTSA) are disordered. A helical membrane pass occupies residues 187 to 207 (LVFVGLTFLMLILIFAAGLMM).

The protein belongs to the Epstein-Barr virus BDLF3 protein family.

It is found in the membrane. The polypeptide is Glycoprotein BDLF3 (Homo sapiens (Human)).